Reading from the N-terminus, the 130-residue chain is Small ribosomal subunit protein uS9 (130 aa).

This sequence belongs to the universal ribosomal protein uS9 family.

The polypeptide is Small ribosomal subunit protein uS9 (Cupriavidus pinatubonensis (strain JMP 134 / LMG 1197) (Cupriavidus necator (strain JMP 134))).